The following is a 396-amino-acid chain: Probable sugar efflux transporter (396 aa).

12 helical membrane passes run 15–35, 50–70, 81–101, 103–123, 136–156, 170–190, 209–229, 246–266, 275–295, 299–319, 333–353, and 364–384; these read VVTL…PVGL, VGIM…PFML, LICL…SWSF, VLVI…SITA, AQAL…GLPL, FFAI…LLPL, PALM…YTAY, FATA…VIFG, ALVS…LPAA, IHLG…GLGM, VAMA…ALVG, and MIGY…IIIF.

The protein belongs to the major facilitator superfamily. SotB (TC 2.A.1.2) family.

It localises to the cell inner membrane. In terms of biological role, involved in the efflux of sugars. The physiological role may be the reduction of the intracellular concentration of toxic sugars or sugar metabolites. The protein is Probable sugar efflux transporter of Escherichia coli O139:H28 (strain E24377A / ETEC).